A 393-amino-acid chain; its full sequence is Small RNA 2'-O-methyltransferase (393 aa).

S-adenosyl-L-methionine contacts are provided by Ser60, Asp78, and Ser114. Mg(2+) is bound by residues Glu132, Glu135, His136, and His181. Residues 283–309 (RVSHLPRRKEQDGEQGDKPKDIGGSKA) are disordered. A compositionally biased stretch (basic and acidic residues) spans 290–305 (RKEQDGEQGDKPKDIG).

Belongs to the methyltransferase superfamily. HEN1 family. Requires Mg(2+) as cofactor.

The protein localises to the cytoplasm. The enzyme catalyses small RNA 3'-end nucleotide + S-adenosyl-L-methionine = small RNA 3'-end 2'-O-methylnucleotide + S-adenosyl-L-homocysteine + H(+). Functionally, methyltransferase that adds a 2'-O-methyl group at the 3'-end of piRNAs, a class of 24 to 30 nucleotide RNAs that are generated by a Dicer-independent mechanism and are primarily derived from transposons and other repeated sequence elements. This probably protects the 3'-end of piRNAs from uridylation activity and subsequent degradation. Stabilization of piRNAs is essential for gametogenesis. The polypeptide is Small RNA 2'-O-methyltransferase (HENMT1) (Macaca fascicularis (Crab-eating macaque)).